The chain runs to 679 residues: Protein hook (679 aa).

One can recognise a Calponin-homology (CH) domain in the interval 6-123; sequence NEMYYSLLEW…RLLQLVLGCA (118 aa). Coiled-coil stretches lie at residues 135–437 and 480–574; these read EIMC…LKCG and QTAL…QEIL.

This sequence belongs to the hook family. In terms of assembly, homodimer. Interacts with microtubules via its N-terminus.

It localises to the cytoplasm. The protein localises to the cytoskeleton. Its subcellular location is the endosome. The protein resides in the synapse. In terms of biological role, involved in endocytic trafficking by stabilizing organelles of the endocytic pathway. Probably acts as a cytoskeletal linker protein required to tether endosome vesicles to the cytoskeleton. Involved in modulation of endocytosis at stages required for down-regulation of membrane proteins that control synapse size. Not involved in synaptic vesicle recycling. Required in R7 cells for boss endocytosis into multivesicular bodies (MVBs). Has a role in regulating adult longevity. The sequence is that of Protein hook from Drosophila simulans (Fruit fly).